The chain runs to 233 residues: MLRVRYAHERGKSHPAIHWLRGYHSFSFADYYSPQHIHFSHLRVINEDIIAPQHGFDMHPHQDMEILTYILSGTIEHQDSMGNHTQLHAGEFQIMSAGSGVHHAEINPSSEHDVHLYQIWILPKSKGIAPRYEQGCFADTEGATLILSPEAKDGAFYIHQDMSLWRWQLSLEQSAVKTIPLLPTRRYWLQLVKGQLRVNDVLLNTSDGLAITHENVLQIELIQNSEFLLFDLV.

A divalent metal cation-binding residues include His59, His61, His103, and Glu105.

The protein belongs to the pirin family. It depends on a divalent metal cation as a cofactor.

It carries out the reaction quercetin + O2 = 2-(3,4-dihydroxybenzoyloxy)-4,6-dihydroxybenzoate + CO. The protein operates within flavonoid metabolism; quercetin degradation. Functionally, putative quercetin 2,3-dioxygenase. This chain is Putative quercetin 2,3-dioxygenase PM1685, found in Pasteurella multocida (strain Pm70).